The chain runs to 465 residues: A-type ATP synthase subunit B (465 aa).

Belongs to the ATPase alpha/beta chains family. The A-type ATPase is composed of subunits A(3), B(3), C, D, E(1 or 2), F, H(2), I and proteolipid K(x).

Its subcellular location is the cell membrane. Component of the A-type ATP synthase that produces ATP from ADP in the presence of a proton gradient across the membrane. The B chain is a regulatory subunit. This is A-type ATP synthase subunit B from Methanocaldococcus jannaschii (strain ATCC 43067 / DSM 2661 / JAL-1 / JCM 10045 / NBRC 100440) (Methanococcus jannaschii).